A 463-amino-acid chain; its full sequence is Argininosuccinate lyase (463 aa).

Belongs to the lyase 1 family. Argininosuccinate lyase subfamily.

The protein localises to the cytoplasm. It catalyses the reaction 2-(N(omega)-L-arginino)succinate = fumarate + L-arginine. It participates in amino-acid biosynthesis; L-arginine biosynthesis; L-arginine from L-ornithine and carbamoyl phosphate: step 3/3. This is Argininosuccinate lyase from Methylorubrum extorquens (strain CM4 / NCIMB 13688) (Methylobacterium extorquens).